A 453-amino-acid chain; its full sequence is MESSILDSLGVEIIGVMAPVSICMFLVVLLTYSLSVTSDPQIRSAANLIYIENPSDSTTVKLEGSLANAIVFVVLIAAVTFILVLLFYYNFTNFLKHYMRFSAFFVLGTMGGAIFLSIIQHFSIPVDSITCFILLFNFTILGTLSVFAGGIPIVLRQCYMVVMGIVVAAWFTKLPEWTTWFILVALALYDLVAVLAPGGPLKLLVELASSRDEELPAMVYEARPTVSSGNQRRNRGSSLRALVGGGGVSDSGSVELQAVRNHDVNQLGRENSHNMDYNAIAVRDIDNVDDGIGNGSRGGLERSPLVGSPSASEHSTSVGTRGNMEDRESVMDEEMSPLVELMGWGDNREEARGLEESDNVVDISNRGIKLGLGDFIFYSVLVGRAAMYDLMTVYACYLAIISGLGCTLILLSVYNRALPALPISIMLGVVFYFLTRLLMEPFVVGVTTNLMMF.

The Cytoplasmic portion of the chain corresponds to 1–8 (MESSILDS). A helical transmembrane segment spans residues 9–29 (LGVEIIGVMAPVSICMFLVVL). Residues 30 to 68 (LTYSLSVTSDPQIRSAANLIYIENPSDSTTVKLEGSLAN) are Lumenal-facing. Residues 69 to 89 (AIVFVVLIAAVTFILVLLFYY) form a helical membrane-spanning segment. The Cytoplasmic segment spans residues 90–103 (NFTNFLKHYMRFSA). The helical transmembrane segment at 104–124 (FFVLGTMGGAIFLSIIQHFSI) threads the bilayer. At 125–132 (PVDSITCF) the chain is on the lumenal side. The chain crosses the membrane as a helical span at residues 133 to 153 (ILLFNFTILGTLSVFAGGIPI). Over 154–159 (VLRQCY) the chain is Cytoplasmic. 2 helical membrane passes run 160–180 (MVVM…WTTW) and 181–201 (FILV…GGPL). The active site involves aspartate 190. Topologically, residues 202–369 (KLLVELASSR…VVDISNRGIK (168 aa)) are cytoplasmic. Disordered regions lie at residues 226–248 (VSSG…GGGV) and 292–329 (IGNG…DRES). Residues 227 to 240 (SSGNQRRNRGSSLR) are compositionally biased toward low complexity. At serine 296 the chain carries Phosphoserine. Over residues 309–320 (PSASEHSTSVGT) the composition is skewed to polar residues. Residues 370–390 (LGLGDFIFYSVLVGRAAMYDL) form a helical membrane-spanning segment. Residue aspartate 374 is part of the active site. Residues 391–392 (MT) lie on the Lumenal side of the membrane. The chain crosses the membrane as a helical span at residues 393 to 413 (VYACYLAIISGLGCTLILLSV). At 414 to 417 (YNRA) the chain is on the cytoplasmic side. The segment at residues 418-438 (LPALPISIMLGVVFYFLTRLL) is an intramembrane region (helical). A PAL motif is present at residues 419–421 (PAL). The Cytoplasmic portion of the chain corresponds to 439-453 (MEPFVVGVTTNLMMF).

Belongs to the peptidase A22A family. As to quaternary structure, homodimer. Probable component of the gamma-secretase complex, a complex composed of a presenilin homodimer, nicastrin, APH1 and PEN2.

The protein resides in the endoplasmic reticulum membrane. It is found in the golgi apparatus membrane. Its function is as follows. Probable subunit of the gamma-secretase complex, an endoprotease complex that catalyzes the intramembrane cleavage of integral membrane proteins such as Notch receptors. In Arabidopsis thaliana (Mouse-ear cress), this protein is Presenilin-like protein At1g08700.